Here is a 120-residue protein sequence, read N- to C-terminus: Large ribosomal subunit protein uL18 (120 aa).

Belongs to the universal ribosomal protein uL18 family. As to quaternary structure, part of the 50S ribosomal subunit; part of the 5S rRNA/L5/L18/L25 subcomplex. Contacts the 5S and 23S rRNAs.

Functionally, this is one of the proteins that bind and probably mediate the attachment of the 5S RNA into the large ribosomal subunit, where it forms part of the central protuberance. This is Large ribosomal subunit protein uL18 from Chloroherpeton thalassium (strain ATCC 35110 / GB-78).